The sequence spans 419 residues: Multifunctional CCA protein (419 aa).

Gly8 and Arg11 together coordinate ATP. CTP is bound by residues Gly8 and Arg11. Positions 21 and 23 each coordinate Mg(2+). ATP contacts are provided by Arg91, Arg141, and Arg144. Arg91, Arg141, and Arg144 together coordinate CTP. The region spanning 230–331 (TGVHVMMVLD…VRLLERCDAL (102 aa)) is the HD domain.

It belongs to the tRNA nucleotidyltransferase/poly(A) polymerase family. Bacterial CCA-adding enzyme type 1 subfamily. Monomer. Can also form homodimers and oligomers. It depends on Mg(2+) as a cofactor. Requires Ni(2+) as cofactor.

The enzyme catalyses a tRNA precursor + 2 CTP + ATP = a tRNA with a 3' CCA end + 3 diphosphate. It catalyses the reaction a tRNA with a 3' CCA end + 2 CTP + ATP = a tRNA with a 3' CCACCA end + 3 diphosphate. Functionally, catalyzes the addition and repair of the essential 3'-terminal CCA sequence in tRNAs without using a nucleic acid template. Adds these three nucleotides in the order of C, C, and A to the tRNA nucleotide-73, using CTP and ATP as substrates and producing inorganic pyrophosphate. tRNA 3'-terminal CCA addition is required both for tRNA processing and repair. Also involved in tRNA surveillance by mediating tandem CCA addition to generate a CCACCA at the 3' terminus of unstable tRNAs. While stable tRNAs receive only 3'-terminal CCA, unstable tRNAs are marked with CCACCA and rapidly degraded. The sequence is that of Multifunctional CCA protein from Paracidovorax citrulli (strain AAC00-1) (Acidovorax citrulli).